The chain runs to 671 residues: Acetyl-coenzyme A synthetase 2 (671 aa).

Residues 207 to 210 (RGGR) and T326 each bind CoA. ATP-binding positions include 402-404 (GEP), 426-431 (DTYWQT), D517, and R532. S540 is a CoA binding site. R543 is a binding site for ATP. R603 contacts CoA.

Belongs to the ATP-dependent AMP-binding enzyme family.

It catalyses the reaction acetate + ATP + CoA = acetyl-CoA + AMP + diphosphate. The chain is Acetyl-coenzyme A synthetase 2 (ACS2) from Candida albicans (strain SC5314 / ATCC MYA-2876) (Yeast).